The following is a 640-amino-acid chain: MKNVNSKQNNHSTIGEQDIHFFHEGKHIYAYEFMGAHKASEDGIDGIRFTTWAPNAKSICVIGDFNHWQVEDKNHMKRITDAGLWSVFIADVKDGDKYKFVVTNKDTNHYVYKSDPYAFFSELRPNTASVISTQTTYKWHDEKWLKKRATADYYNSPMNTYELHLASWKTKDDRFMTYEEIAEVLPKYVKDMGYTHVEFMPLHEHPLDASWGYQPTGFYSINSRHGDLVGLKHLVDKLHTHDIGVILDWVPGHFCKDQHGLINFDGSACYEYQEPTKAINKGWGTHNFDLGRNEVKCFLISNAMYWINEFHIDGLRVDAVSNILYLNYDREDGQWVPNIHGGHENLEGIAFLRELNGVLKHTCKGVITIAEESSSWPNISTPVEQGGLGFDFKWNMGWMNDTLRYISLDPVYRKYHHNLITFSMVYHYSEKFILSISHDEVVHGKKSLINKMWGDLWNKYAGLRLYMSFMIGHPGKKLIFMGSEFGQFIEWREYEQLQWQVVDEYHTHRETLNFFKKLNEFYKAETALWECDYDHKGFQWIDANNSEQSILSFVRSNKDGKEKLIFVCNFTPVTYYDYHIGVPDAGSYIEAFNSDDLEFGGSGQLIADEIFSTPESSHGFDQRITIKVPPMATLVLKLKK.

The active-site Nucleophile is the Asp318. Residue Glu371 is the Proton donor of the active site.

Belongs to the glycosyl hydrolase 13 family. GlgB subfamily. In terms of assembly, monomer.

The catalysed reaction is Transfers a segment of a (1-&gt;4)-alpha-D-glucan chain to a primary hydroxy group in a similar glucan chain.. The protein operates within glycan biosynthesis; glycogen biosynthesis. Catalyzes the formation of the alpha-1,6-glucosidic linkages in glycogen by scission of a 1,4-alpha-linked oligosaccharide from growing alpha-1,4-glucan chains and the subsequent attachment of the oligosaccharide to the alpha-1,6 position. The sequence is that of 1,4-alpha-glucan branching enzyme GlgB from Francisella philomiragia subsp. philomiragia (strain ATCC 25017 / CCUG 19701 / FSC 153 / O#319-036).